Consider the following 237-residue polypeptide: Phosphoribosylaminoimidazole-succinocarboxamide synthase (237 aa).

This sequence belongs to the SAICAR synthetase family.

The catalysed reaction is 5-amino-1-(5-phospho-D-ribosyl)imidazole-4-carboxylate + L-aspartate + ATP = (2S)-2-[5-amino-1-(5-phospho-beta-D-ribosyl)imidazole-4-carboxamido]succinate + ADP + phosphate + 2 H(+). Its pathway is purine metabolism; IMP biosynthesis via de novo pathway; 5-amino-1-(5-phospho-D-ribosyl)imidazole-4-carboxamide from 5-amino-1-(5-phospho-D-ribosyl)imidazole-4-carboxylate: step 1/2. In Psychrobacter arcticus (strain DSM 17307 / VKM B-2377 / 273-4), this protein is Phosphoribosylaminoimidazole-succinocarboxamide synthase.